A 605-amino-acid chain; its full sequence is Protein phosphatase 1D (605 aa).

Positions M1–F101 are interaction with CHEK1. The 368-residue stretch at G8–I375 folds into the PPM-type phosphatase domain. The segment at V28–R90 is disordered. Phosphoserine is present on residues S40 and S85. The Mn(2+) site is built by D105, G106, D314, and D366. The segment at S516–G591 is disordered. 2 stretches are compositionally biased toward polar residues: residues P530–G544 and L555–K577. Residues T579–K588 are compositionally biased toward basic residues.

The protein belongs to the PP2C family. As to quaternary structure, interacts with CHEK1 and CHEK2; dephosphorylates them. Interacts with MAPK14. Mg(2+) is required as a cofactor. Requires Mn(2+) as cofactor. In terms of tissue distribution, expressed in fetal and adult brain. Also detected in fetal liver and skeletal muscle, but not in their adult counterparts.

The protein resides in the nucleus. Its subcellular location is the cytoplasm. It localises to the cytosol. It catalyses the reaction O-phospho-L-seryl-[protein] + H2O = L-seryl-[protein] + phosphate. It carries out the reaction O-phospho-L-threonyl-[protein] + H2O = L-threonyl-[protein] + phosphate. Functionally, involved in the negative regulation of p53 expression. Required for the relief of p53-dependent checkpoint mediated cell cycle arrest. Binds to and dephosphorylates 'Ser-15' of TP53 and 'Ser-345' of CHEK1 which contributes to the functional inactivation of these proteins. Mediates MAPK14 dephosphorylation and inactivation. Is also an important regulator of global heterochromatin silencing and critical in maintaining genome integrity. The polypeptide is Protein phosphatase 1D (PPM1D) (Homo sapiens (Human)).